The sequence spans 57 residues: Toxin GhoT (57 aa).

2 helical membrane-spanning segments follow: residues 7–27 (ILIF…FISH) and 37–57 (AFLV…FSLF).

This sequence belongs to the GhoT/OrtT toxin family.

The protein resides in the cell inner membrane. Functionally, toxic component of a type V toxin-antitoxin (TA) system. Causes membrane damage when induced by MqsR, slowing cell growth and leading to the formation of dormant persister cells; involved with GhoS, its antitoxin, in reducing cell growth during antibacterial stress. Its toxic effects are neutralized by GhoS, which digests ghoT transcripts in a sequence-specific manner. In Escherichia coli O157:H7, this protein is Toxin GhoT.